The primary structure comprises 361 residues: Protein YIM1-2 (361 aa).

It belongs to the YIM1 family.

It is found in the lipid droplet. The protein localises to the mitochondrion. This is Protein YIM1-2 (YIM1-2) from Lachancea thermotolerans (strain ATCC 56472 / CBS 6340 / NRRL Y-8284) (Yeast).